The primary structure comprises 241 residues: Probable GTP-binding protein EngB (241 aa).

One can recognise an EngB-type G domain in the interval 56–240 (GPVEIAFAGR…RAAIALLLKE (185 aa)). GTP contacts are provided by residues 64-71 (GRSNVGKS), 91-95 (GRTQE), 118-121 (DMPG), 185-188 (TKID), and 219-221 (TSS). Residues S71 and T93 each contribute to the Mg(2+) site.

The protein belongs to the TRAFAC class TrmE-Era-EngA-EngB-Septin-like GTPase superfamily. EngB GTPase family. Mg(2+) is required as a cofactor.

Functionally, necessary for normal cell division and for the maintenance of normal septation. In Brucella suis biovar 1 (strain 1330), this protein is Probable GTP-binding protein EngB.